Here is a 934-residue protein sequence, read N- to C-terminus: Progesterone receptor (934 aa).

The segment at Met-1 to Ser-49 is disordered. Residues Met-1 to Leu-164 form an AF3; mediates transcriptional activation region. Positions Met-1 to Ile-567 are modulating, Pro-Rich. Ser-20 is modified (phosphoserine). An LXXL motif 1 motif is present at residues Leu-55–Leu-59. The tract at residues Pro-61–Gly-239 is disordered. Ser-81 carries the phosphoserine modification. Residues Leu-115–Leu-119 carry the LXXL motif 2 motif. Residues Ser-130 and Ser-162 each carry the phosphoserine modification. The interval Met-165 to His-305 is mediates transcriptional transrepression. Positions Lys-183–Arg-187 match the Nuclear localization signal motif. The residue at position 190 (Ser-190) is a Phosphoserine. Positions Pro-191–Pro-203 are enriched in polar residues. Ser-213 bears the Phosphoserine mark. The segment covering Glu-220–Asp-231 has biased composition (acidic residues). A Phosphoserine; by MAPK1 modification is found at Ser-294. A disordered region spans residues Gly-331 to Pro-375. Over residues Ala-335 to Ser-350 the composition is skewed to low complexity. Ser-345 is modified (phosphoserine; by MAPK). Lys-388 participates in a covalent cross-link: Glycyl lysine isopeptide (Lys-Gly) (interchain with G-Cter in SUMO); alternate. Lys-388 participates in a covalent cross-link: Glycyl lysine isopeptide (Lys-Gly) (interchain with G-Cter in ubiquitin); alternate. Ser-400 is subject to Phosphoserine; by CDK2. The interval Pro-415–Pro-454 is disordered. Over residues Pro-418–Arg-433 the composition is skewed to pro residues. Residues Pro-434–Pro-454 show a composition bias toward low complexity. Residues Ser-456 to Arg-547 are AF1; mediates transcriptional activation. Residue Lys-532 forms a Glycyl lysine isopeptide (Lys-Gly) (interchain with G-Cter in SUMO) linkage. NR C4-type zinc fingers lie at residues Cys-568–Cys-588 and Cys-604–Cys-628. Positions Cys-568–Phe-640 form a DNA-binding region, nuclear receptor. Position 677 is a phosphoserine (Ser-677). In terms of domain architecture, NR LBD spans Gln-680–Ile-914. The tract at residues Leu-688 to Lys-934 is AF2; mediates transcriptional activation. Residue Arg-767 participates in progesterone binding.

Belongs to the nuclear hormone receptor family. As to quaternary structure, interacts with SMARD1 and UNC45A. Interacts with CUEDC2; the interaction promotes ubiquitination, decreases sumoylation, and represses transcriptional activity. Interacts with PIAS3; the interaction promotes sumoylation of PR in a hormone-dependent manner, inhibits DNA-binding, and alters nuclear export. Interacts with SP1; the interaction requires ligand-induced phosphorylation on Ser-345 by ERK1/2-MAPK. Interacts with PRMT2. Interacts with NCOA2 and NCOA1. Interacts with KLF9. Interacts with GTF2B. Phosphorylated on multiple serine sites. Several of these sites are hormone-dependent. Phosphorylation on Ser-294 is highly hormone-dependent and modulates ubiquitination and sumoylation on Lys-388. Phosphorylation on Ser-345 also requires induction by hormone. Basal phosphorylation on Ser-81, Ser-162, Ser-190 and Ser-400 is increased in response to progesterone and can be phosphorylated in vitro by the CDK2-A1 complex. Increased levels of phosphorylation on Ser-400 also in the presence of EGF, heregulin, IGF, PMA and FBS. Phosphorylation at this site by CDK2 is ligand-independent, and increases nuclear translocation and transcriptional activity. Phosphorylation at Ser-162 and Ser-294, but not at Ser-190, is impaired during the G(2)/M phase of the cell cycle. Phosphorylation on Ser-345 by ERK1/2 MAPK is required for interaction with SP1. Post-translationally, sumoylation is hormone-dependent and represses transcriptional activity. Sumoylation on all three sites is enhanced by PIAS3. Desumoylated by SENP1. Sumoylation on Lys-388, the main site of sumoylation, is repressed by ubiquitination on the same site, and modulated by phosphorylation at Ser-294. In terms of processing, ubiquitination is hormone-dependent and represses sumoylation on the same site. Promoted by MAPK-mediated phosphorylation on Ser-294. Ubiquitinated by UBR5, leading to its degradation: UBR5 specifically recognizes and binds ligand-bound PGR when it is not associated with coactivators (NCOAs). In presence of NCOAs, the UBR5-degron is not accessible, preventing its ubiquitination and degradation. Palmitoylated by ZDHHC7 and ZDHHC21. Palmitoylation is required for plasma membrane targeting and for rapid intracellular signaling via ERK and AKT kinases and cAMP generation.

It is found in the nucleus. The protein resides in the cytoplasm. In terms of biological role, the steroid hormones and their receptors are involved in the regulation of eukaryotic gene expression and affect cellular proliferation and differentiation in target tissues. Transcriptional activator of several progesteron-dependent promoters in a variety of cell types. Involved in activation of SRC-dependent MAPK signaling on hormone stimulation. This chain is Progesterone receptor (PGR), found in Colobus guereza (Mantled guereza).